The sequence spans 174 residues: Regenerating islet-derived protein 3-gamma (174 aa).

The N-terminal stretch at 1 to 26 (MLPRITITIMSWMLLSCLMLLSQVQG) is a signal peptide. Residues 27–37 (EVAKKDAPSSR) constitute a propeptide that is removed on maturation. 3 disulfides stabilise this stretch: C40-C51, C68-C170, and C145-C162. One can recognise a C-type lectin domain in the interval 47–171 (YGSYCYALFS…CNLELPYVCK (125 aa)). A sufficient to activate EXTL3 region spans residues 103–118 (WIGLHDPTLGYEPNRG). H107 provides a ligand contact to Zn(2+). An EPN motif is present at residues 114 to 116 (EPN). Zn(2+) is bound by residues E121 and H144.

Forms a hexameric membrane-permeabilizing oligomeric pore on membrane phospholipids. The hexamer is formed by three dimers related by helical symmetry. Forms filaments, filamentation traps pore complexes and limits damage to host cells. Interacts with EXTL3. In terms of processing, proteolytic processing by trypsin removes an inhibitory N-terminal propeptide and is essential for peptidoglycan binding and antibacterial activity. In terms of tissue distribution, predominantly expressed in the small intestine, including Paneth cells (at protein level). Hardly detectable in the colon (at protein level). Highly expressed in the lung epithelium during methicillin-resistant S.aureus infection and allergic airway inflammation (at protein level). Skin injury increases its epidermal expression. Also expressed in the pancreas. Expressed by nocireceptors.

Its subcellular location is the secreted. The protein localises to the cytoplasm. With respect to regulation, lipopolysaccharide inhibits pore-forming activity, explaining why is bactericidal for Gram-positive but not Gram-negative bacteria. Its function is as follows. Bactericidal C-type lectin which acts exclusively against Gram-positive bacteria and mediates bacterial killing by binding to surface-exposed carbohydrate moieties of peptidoglycan. Restricts bacterial colonization of the intestinal epithelial surface and consequently limits activation of adaptive immune responses by the microbiota. Acts as a hormone in response to different stimuli like anti-inflammatory signals, such as IL17A, or gut microbiome. Is secreted by different cell types to activate its receptor EXTL3 and induce cell specific signaling pathways. Induced by IL17A in keratinocytes, regulates keratinocyte proliferation and differentiation after skin injury. In parallel, inhibits skin inflammation through the inhibition of inflammatory cytokines such as IL6 and TNF. Induced by IL22 in lung epithelial cells, inhibits cytokine production and regulates allergic airway inflammation. Induced in small intestine by inulin-enriched diet and Lactobacillus gasseri enriched microbiome, plays a role in the improvement of gut barrier function, the regulation of energy balance and glucose levels. Modulates microbiota composition in duodenal contents. Produced by nociceptor in response to endotoxins, prevents endotoxic death by targeting kynurenine pathway in microglia. Functionally, has bacteriostatic activity. In terms of biological role, has bactericidal activity against L.monocytogenes and methicillin-resistant S.aureus. The protein is Regenerating islet-derived protein 3-gamma of Mus musculus (Mouse).